The primary structure comprises 453 residues: MKKKVGIISLGCPKNLVDSEIMLGLLKKNDFEITSDSEEANVIIVNTCGFIESAKEESINTILEMANYKNKNCEMLIVAGCLAQRYKDEIIKEMPEVDAVVGVSGYDEIAKVIEEFYSKKNDKNDKEKAVFHKDTLSVEYLNNERLLSTNSGYAYLKISEGCDNRCTYCAIPYIRGPYRSRKMEDIISEAEFLAGKGVKEVILVAQDVTVYGKDLYGQKKLVELVREVSGIEGIEWIRLLYTYPEEIDEELIKEIANNEKVVKYLDIPIQHASDKILKLMGRRSTSEGIRNILDRLRAEVPDIVLRTSLIVGFPGEDEKDFKILYDFVRKYEFDRLGVFTYSREEGTPAYDLKPQIKKSVKESRRNDIMQLQKEIVQRKNESRLEKVYKTLVEGVSEDGIFYYGRTYAEAPDIDGSVYFTSAEPLKFGEFVNVKVLNIDDYDLIGEVINESSK.

Residues 3-118 (KKVGIISLGC…IAKVIEEFYS (116 aa)) enclose the MTTase N-terminal domain. Residues Cys12, Cys48, Cys81, Cys162, Cys166, and Cys169 each coordinate [4Fe-4S] cluster. The region spanning 148–378 (STNSGYAYLK…MQLQKEIVQR (231 aa)) is the Radical SAM core domain. In terms of domain architecture, TRAM spans 381 to 449 (ESRLEKVYKT…DYDLIGEVIN (69 aa)).

Belongs to the methylthiotransferase family. RimO subfamily. Requires [4Fe-4S] cluster as cofactor.

The protein resides in the cytoplasm. The catalysed reaction is L-aspartate(89)-[ribosomal protein uS12]-hydrogen + (sulfur carrier)-SH + AH2 + 2 S-adenosyl-L-methionine = 3-methylsulfanyl-L-aspartate(89)-[ribosomal protein uS12]-hydrogen + (sulfur carrier)-H + 5'-deoxyadenosine + L-methionine + A + S-adenosyl-L-homocysteine + 2 H(+). Its function is as follows. Catalyzes the methylthiolation of an aspartic acid residue of ribosomal protein uS12. The sequence is that of Ribosomal protein uS12 methylthiotransferase RimO from Acetivibrio thermocellus (strain ATCC 27405 / DSM 1237 / JCM 9322 / NBRC 103400 / NCIMB 10682 / NRRL B-4536 / VPI 7372) (Clostridium thermocellum).